Here is a 189-residue protein sequence, read N- to C-terminus: MEYKAPIGVKIDLETGVIPGAKKLVRRLSDLKGYFIDEEAYNELLREDPVVYEVYAIEQEEKDGDLNFATTVLYPGKVGKEFFFTKGHYHAKADRAEIYYAIKGKGGMLLQTPEGNAKWVPMEPGTVVYVPPYWAHRTVNTGDEPFIFLAIYPADAGHDYGSIKEKGFSKLVIEEGGEVKVVDNPKWKA.

Fe cation-binding residues include His88, His90, Glu97, and His136.

This sequence belongs to the archaeal-type GPI family. Homodimer.

The protein resides in the cytoplasm. The catalysed reaction is alpha-D-glucose 6-phosphate = beta-D-fructose 6-phosphate. It functions in the pathway carbohydrate degradation; glycolysis; D-glyceraldehyde 3-phosphate and glycerone phosphate from D-glucose: step 2/4. The chain is Glucose-6-phosphate isomerase from Thermococcus onnurineus (strain NA1).